A 583-amino-acid chain; its full sequence is Aspartate--tRNA ligase (583 aa).

E169 is an L-aspartate binding site. The interval 193–196 (QLFK) is aspartate. Position 215 (R215) interacts with L-aspartate. ATP contacts are provided by residues 215 to 217 (RDE) and Q224. Residue H443 participates in L-aspartate binding. E477 serves as a coordination point for ATP. R484 lines the L-aspartate pocket. Residue 529–532 (GIDR) coordinates ATP.

This sequence belongs to the class-II aminoacyl-tRNA synthetase family. Type 1 subfamily. Homodimer.

The protein localises to the cytoplasm. The enzyme catalyses tRNA(Asp) + L-aspartate + ATP = L-aspartyl-tRNA(Asp) + AMP + diphosphate. Its function is as follows. Catalyzes the attachment of L-aspartate to tRNA(Asp) in a two-step reaction: L-aspartate is first activated by ATP to form Asp-AMP and then transferred to the acceptor end of tRNA(Asp). This Stenotrophomonas maltophilia (strain K279a) protein is Aspartate--tRNA ligase.